The sequence spans 1186 residues: DNA excision repair protein ERCC-5 (1186 aa).

The N-domain stretch occupies residues 1–78 (MGVQGLWKLL…RIRPIFVFDG (78 aa)). At Lys8 the chain carries N6-acetyllysine. Asp30 is a Mg(2+) binding site. Positions 31–67 (ISIWLNQALKGVRDRHGNSIENPHLLTLFHRLCKLLF) are DNA-binding; may bind to the undamaged single-strand DNA of the DNA repair bubble. Asp77 is a binding site for Mg(2+). The tract at residues 79–785 (DAPLLKKQTL…LRLFGIPYIQ (707 aa)) is spacer region. 5 disordered regions span residues 306–342 (ESLPSSSKMHGMSFDVKSSPCEKLKTEKEPDATPPSP), 354–385 (GSSSEEELESENRRQARGRNAPAAVDEGSISP), 404–473 (CAGD…SVPK), 510–533 (HSDAPGLPNGRELTPASPTCTNSV), and 667–724 (QAEF…AEDS). Basic and acidic residues predominate over residues 325–336 (PCEKLKTEKEPD). Position 384 is a phosphoserine (Ser384). The span at 454–472 (AEEHVASTNEGREPTDSVP) shows a compositional bias: basic and acidic residues. Ser705 bears the Phosphoserine mark. An I-domain region spans residues 786–881 (APMEAEAQCA…VTAMEILNEF (96 aa)). Glu789, Glu791, Asp810, and Asp812 together coordinate Mg(2+). The tract at residues 820–836 (HVYRNFFNKNKFVEYYQ) is DNA-binding; may bind to the undamaged single-strand DNA of the DNA repair bubble. A DNA-binding; H2TH (helix-2turn-helix) motif which binds double-stranded DNA region spans residues 848 to 880 (RNKLINLAYLLGSDYTEGIPTVGCVTAMEILNE). Asp861 is a Mg(2+) binding site. The segment at 912–918 (TKVKKKL) is DNA-binding; may bind double-stranded DNA. The interval 981 to 1009 (LKQLDAQQTQLRIDSFFRLAQQEKEDAKR) is interaction with PCNA. The segment at 1011–1186 (KSQRLNRAVT…RRARGRKRKT (176 aa)) is interaction with ERCC6/CSB. 2 disordered regions span residues 1056 to 1081 (QKRGITNTLEESSSLKRKRLSDSKGK) and 1095 to 1186 (ESSD…KRKT). Positions 1057-1074 (KRGITNTLEESSSLKRKR) match the Nuclear localization signal 1 motif. A compositionally biased stretch (polar residues) spans 1124-1133 (TSASDSQNSV). The Nuclear localization signal 2 motif lies at 1169–1186 (FGKKRRKLRRARGRKRKT). Residues 1169–1186 (FGKKRRKLRRARGRKRKT) show a composition bias toward basic residues.

Belongs to the XPG/RAD2 endonuclease family. XPG subfamily. Monomer. Homodimer. Component of the homologous recombination repair (HR) complex composed of ERCC5/XPG, BRCA2, PALB2, DSS1 and RAD51. Within the complex, interacts with BRCA2 and PALB2. Interacts with RNA polymerase II. Interacts (via C-terminus) with ERCC6/CSB; the interaction stimulates ERCC6/CSB binding to the DNA repair bubble and ERCC6/CSB ATPase activity. May form a complex composed of RNA polymerase II, ERCC6/CSB and ERCC5/XPG which associates with the DNA repair bubble during transcription-coupled nucleotide excision repair. Interacts with BRCA1; the interaction promotes the release of BRCA1 from DNA. Interacts with PCNA. Interacts with NTHL1; the interaction stimulates NTHL1 activity and NTHL1 binding to its DNA substrate. The cofactor is Mg(2+).

The protein resides in the nucleus. It is found in the chromosome. Its function is as follows. Single-stranded structure-specific DNA endonuclease involved in DNA excision repair. Makes the 3'incision in DNA nucleotide excision repair (NER). Binds and bends DNA repair bubble substrate and breaks base stacking at the single-strand/double-strand DNA junction of the DNA bubble. Plays a role in base excision repair (BER) by promoting the binding of DNA glycosylase NTHL1 to its substrate and increasing NTHL1 catalytic activity that removes oxidized pyrimidines from DNA. Involved in transcription-coupled nucleotide excision repair (TCR) which allows RNA polymerase II-blocking lesions to be rapidly removed from the transcribed strand of active genes. Functions during the initial step of TCR in cooperation with ERCC6/CSB to recognized stalled RNA polymerase II. Also, stimulates ERCC6/CSB binding to the DNA repair bubble and ERCC6/CSB ATPase activity. Required for DNA replication fork maintenance and preservation of genomic stability. Involved in homologous recombination repair (HRR) induced by DNA replication stress by recruiting RAD51, BRCA2, and PALB2 to the damaged DNA site. In TFIIH stimulates the 5'-3' helicase activity of XPD/ERCC2 and the DNA translocase activity of XPB/ERCC3. During HRR, binds to the replication fork with high specificity and stabilizes it. Also, acts upstream of HRR, to promote the release of BRCA1 from DNA. The polypeptide is DNA excision repair protein ERCC-5 (ERCC5) (Homo sapiens (Human)).